The primary structure comprises 167 residues: MEVVDPEDRDPDDMLLIDRIGDAVAGDAGNDSDSQEEQLEHQVLEQQLAHHQAHHPLRRDNRHVAMLLDAPLEPPPMGLFEGARAGGVAHPRPPARSKKRSFFTIVRPTVLRNQRPELCPLFLNASRAIGEVREEQRGEFFAEYLFENMTSENYPNGVGLPHHWGQL.

Residues Asn-30, Asn-124, and Asn-148 are each glycosylated (N-linked (GlcNAc...) asparagine).

It belongs to the male-specific scotti family.

Functionally, post-meiotically transcribed gene that has a role in late spermiogenesis; required for actin cone progression during spermatid individualization. This is Male-specific protein scotti from Drosophila ananassae (Fruit fly).